Reading from the N-terminus, the 281-residue chain is Urease accessory protein UreD 2 (281 aa).

Belongs to the UreD family. UreD, UreF and UreG form a complex that acts as a GTP-hydrolysis-dependent molecular chaperone, activating the urease apoprotein by helping to assemble the nickel containing metallocenter of UreC. The UreE protein probably delivers the nickel.

Its subcellular location is the cytoplasm. Required for maturation of urease via the functional incorporation of the urease nickel metallocenter. The sequence is that of Urease accessory protein UreD 2 from Pseudomonas syringae pv. syringae (strain B728a).